We begin with the raw amino-acid sequence, 313 residues long: Leucine-rich repeat-containing protein 52 (313 aa).

The signal sequence occupies residues 1-23 (MSLASGPGPGWLLFSFGMGLVSG). In terms of domain architecture, LRRNT spans 24–53 (SKCPNNCLCQAQEVICTGKQLTEYPLDIPL). The Extracellular segment spans residues 24–244 (SKCPNNCLCQ…MCITHLDHKD (221 aa)). 2 disulfide bridges follow: C26-C32 and C30-C39. 5 LRR repeats span residues 54–75 (NTRR…HLGL), 78–99 (DLVY…TFIG), 102–123 (KLIY…TFSV), 126–148 (NLVQ…TFAN), and 151–172 (SLRY…ALYH). N-linked (GlcNAc...) asparagine glycans are attached at residues N112 and N148. Residues 184–238 (NPWKCNCSFLDFAIFLIVFHMDPSDDLNATCVEPTELTGWPITRVGNPLRYMCIT) enclose the LRRCT domain. Cystine bridges form between C188/C214 and C190/C236. N189 and N211 each carry an N-linked (GlcNAc...) asparagine glycan. Residues 245–265 (YIFLLLIGFCIFAAGTVAAWL) form a helical membrane-spanning segment. Residues 266-313 (TGVCAVLYQNTRHKSSEEDEDEAGTRVEVSRRIFQTQTSSVQEFPQLI) lie on the Cytoplasmic side of the membrane.

In terms of assembly, may interact with KCNU1; this interaction may be required for LRRC52 stability and may change the channel gating properties. Interacts with KCNMA1. N-glycosylated. As to expression, mainly expressed in testis and skeletal muscle.

It is found in the cell membrane. Functionally, auxiliary protein of the large-conductance, voltage and calcium-activated potassium channel (BK alpha). Modulates gating properties by producing a marked shift in the BK channel's voltage dependence of activation in the hyperpolarizing direction, and in the absence of calcium. KCNU1 channel auxiliary protein. Modulates KCNU1 gating properties. The chain is Leucine-rich repeat-containing protein 52 (LRRC52) from Homo sapiens (Human).